We begin with the raw amino-acid sequence, 653 residues long: MWTGGRRPGRLRRAASAADMEKLRLRSAWVPSCLGQSRNLQGRRARSSPSLWDSSLQEQKGELRKRLSYTTHRLEKLENEFDSTRHFLEIELRRAQEELEKVTEKLRRIQSNYMALQRINQELEDKLFRMGQHYEEEKRALSHEIVALNSHLLEAKVTIDKLSEDNELYRKDCSLAAQLLQCSQAYGRGRKMAELPAEFQERMNLHAEKPGCSLPAPPRRPAYADSVPPCVLAKVLEKPDPGSLSSHLSEASAQDLGFPEGLEKPGSRPPYKGDIYCSDTALYCPEARHQDRRPSVEGPGSDVGFLQAQNSTDSTAEEEEEEEEDTEAGAAAYPASYRHEAFGGYAASLPTSSSYSSFSAASEEKEHAQASTLTASQQAIYLNSRDELFGRKPAAAYGSSPRYAAAAAAVAAPLEAAMAPGFPRTVSPFPGEPFRFPLSPGPQPALMPPNLWNLRAKPGSARLVAGAGRGQWRPLSVDDIGAYPFPAAAAAPAPSLASPGGGFNDRYFGARGGPGDNAEGRASPLYASYKADSFSEGDDLSQGHLVEPRYLRAAGDLSLSPGHSADPLPSYAASEGDRERLGVQLLGASGSPEPELSLRSSRDSLEPSSMEASPEMHPGARLSPQPAFPRAGSSGLSRKDSLTKAQLYGTLLN.

Position 186 is a phosphotyrosine (Tyr186). Residues 241–271 (PGSLSSHLSEASAQDLGFPEGLEKPGSRPPY) are disordered. Over residues 243–252 (SLSSHLSEAS) the composition is skewed to polar residues. Phosphoserine is present on residues Ser249, Ser278, Ser295, and Ser314. Residues 288 to 329 (RHQDRRPSVEGPGSDVGFLQAQNSTDSTAEEEEEEEEDTEAG) form a disordered region. Residues 315 to 327 (TAEEEEEEEEDTE) are compositionally biased toward acidic residues. Ser400 and Ser427 each carry phosphoserine. Arg435 is modified (asymmetric dimethylarginine). Phosphoserine is present on residues Ser523, Ser533, Ser535, Ser558, Ser560, Ser564, Ser613, and Ser623. The tract at residues 587–653 (GASGSPEPEL…KAQLYGTLLN (67 aa)) is disordered.

In terms of assembly, interacts with DLG4 and DLGAP1 and forms a ternary complex.

The protein localises to the cytoplasm. It localises to the membrane. Functionally, may sustain the structure of the postsynaptic density (PSD). This chain is Brain-enriched guanylate kinase-associated protein (BEGAIN), found in Ovis aries (Sheep).